We begin with the raw amino-acid sequence, 56 residues long: Alpha-pompilidotoxin (56 aa).

The first 22 residues, 1–22, serve as a signal peptide directing secretion; that stretch reads MFKQLILLALAAVFLLINISSA. A propeptide spanning residues 23–42 is cleaved from the precursor; it reads EPAAEPNANAEPLAEASAEP. L55 bears the Leucine amide mark.

In terms of tissue distribution, expressed by the venom gland.

The protein localises to the secreted. Its function is as follows. Inhibits sodium channels (Nav) inactivation. Shows two types of inhibitory activities on channels. Inhibition of hNav1.6/SCN8A shows a large increase in the steady-state current component without any increase in the slow component, whereas inhibition of hNav1.1/SCN1A, hNav1.2/SCN2A, hNav1.3/SCN3A and hNav1.7/SCN9A shows a large increase in the slow component with only a small steady-state component. Is 5-fold less potent than beta-PMTX for inducing repetitive action potentials in lobster neuromuscular junctions. The protein is Alpha-pompilidotoxin of Anoplius samariensis (Solitary wasp).